Here is a 748-residue protein sequence, read N- to C-terminus: EF-hand domain-containing family member C2 (748 aa).

DM10 domains follow at residues 75–182 (DKQV…VKMG), 226–366 (DRQV…RSKY), and 428–535 (VSNV…EQHA). 2 EF-hand domains span residues 556-591 (EQQK…LDVE) and 631-666 (EKFS…FRLP).

The protein resides in the cytoplasm. It is found in the cytoskeleton. Its subcellular location is the cilium axoneme. Its function is as follows. Microtubule inner protein (MIP) part of the dynein-decorated doublet microtubules (DMTs) in cilia axoneme, which is required for motile cilia beating. The polypeptide is EF-hand domain-containing family member C2 (efhc2) (Danio rerio (Zebrafish)).